We begin with the raw amino-acid sequence, 107 residues long: Guanylin (107 aa).

Residues 1–20 (MNTFLLSALCLGAWAALVGA) form the signal peptide. The propeptide occupies 21 to 92 (VTVQDGDFSF…LNRLAVIAQD (72 aa)). 3 disulfide bridges follow: C61–C74, C96–C104, and C99–C107.

It belongs to the guanylin family.

It localises to the secreted. Its function is as follows. Endogenous activator of intestinal guanylate cyclase. It stimulates this enzyme through the same receptor binding region as the heat-stable enterotoxins. The protein is Guanylin (GUCA2A) of Cavia porcellus (Guinea pig).